Consider the following 335-residue polypeptide: Glucokinase (335 aa).

11-16 contributes to the ATP binding site; it reads ADIGGT.

Belongs to the bacterial glucokinase family.

It localises to the cytoplasm. It catalyses the reaction D-glucose + ATP = D-glucose 6-phosphate + ADP + H(+). The polypeptide is Glucokinase (Xanthomonas axonopodis pv. citri (strain 306)).